Consider the following 831-residue polypeptide: Zinc phosphodiesterase ELAC protein 2 (831 aa).

The transit peptide at Met1–Met16 directs the protein to the mitochondrion. Disordered regions lie at residues Thr15 to Pro47 and Ser179 to Lys227. Polar residues predominate over residues Gln186–Asn212. Phosphoserine is present on residues Ser191, Ser195, Ser200, Ser204, and Ser732. The tract at residues Leu791 to Val831 is disordered. The residue at position 792 (Thr792) is a Phosphothreonine. Ser797 and Ser815 each carry phosphoserine. The segment covering Pro798–Ser822 has biased composition (basic and acidic residues).

Belongs to the RNase Z family. In terms of assembly, homodimer. Interacts with PTCD1. It depends on Zn(2+) as a cofactor.

The protein localises to the mitochondrion. The protein resides in the mitochondrion matrix. Its subcellular location is the mitochondrion nucleoid. It is found in the nucleus. It catalyses the reaction Endonucleolytic cleavage of RNA, removing extra 3' nucleotides from tRNA precursor, generating 3' termini of tRNAs. A 3'-hydroxy group is left at the tRNA terminus and a 5'-phosphoryl group is left at the trailer molecule.. In terms of biological role, zinc phosphodiesterase, which displays mitochondrial tRNA 3'-processing endonuclease activity. Involved in tRNA maturation, by removing a 3'-trailer from precursor tRNA. Associates with mitochondrial DNA complexes at the nucleoids to initiate RNA processing and ribosome assembly. In Mus musculus (Mouse), this protein is Zinc phosphodiesterase ELAC protein 2 (Elac2).